A 244-amino-acid polypeptide reads, in one-letter code: ATP synthase subunit a (244 aa).

Transmembrane regions (helical) follow at residues 17-37 (LTNILMITVASVIVLLIAILT), 75-95 (FLALGVTLLMYIFVSNMLGLP), 112-132 (DPAITLTLAVMVVALTHYYGV), 170-190 (LYGNIFAGEILLGLLAGLATS), and 221-241 (GAIQAFIFTMLTMVYMSHKIS).

This sequence belongs to the ATPase A chain family. F-type ATPases have 2 components, CF(1) - the catalytic core - and CF(0) - the membrane proton channel. CF(1) has five subunits: alpha(3), beta(3), gamma(1), delta(1), epsilon(1). CF(0) has three main subunits: a(1), b(2) and c(9-12). The alpha and beta chains form an alternating ring which encloses part of the gamma chain. CF(1) is attached to CF(0) by a central stalk formed by the gamma and epsilon chains, while a peripheral stalk is formed by the delta and b chains. The F(1)F(0) complex interacts with SpoIIIJ and YqjG; YqgA is found in the same complex.

It is found in the cell membrane. Key component of the proton channel; it plays a direct role in the translocation of protons across the membrane. The polypeptide is ATP synthase subunit a (Bacillus subtilis (strain 168)).